The primary structure comprises 334 residues: Glycerol-3-phosphate dehydrogenase [NAD(P)+] (334 aa).

Positions 13, 33, and 106 each coordinate NADPH. Sn-glycerol 3-phosphate is bound by residues Lys106, Gly137, and Ser139. Residue Ala141 participates in NADPH binding. Sn-glycerol 3-phosphate is bound by residues Lys192, Asp245, Ser255, Arg256, and Asn257. Lys192 serves as the catalytic Proton acceptor. Residue Arg256 coordinates NADPH. NADPH contacts are provided by Val280 and Glu282.

This sequence belongs to the NAD-dependent glycerol-3-phosphate dehydrogenase family.

Its subcellular location is the cytoplasm. The catalysed reaction is sn-glycerol 3-phosphate + NAD(+) = dihydroxyacetone phosphate + NADH + H(+). It catalyses the reaction sn-glycerol 3-phosphate + NADP(+) = dihydroxyacetone phosphate + NADPH + H(+). The protein operates within membrane lipid metabolism; glycerophospholipid metabolism. Functionally, catalyzes the reduction of the glycolytic intermediate dihydroxyacetone phosphate (DHAP) to sn-glycerol 3-phosphate (G3P), the key precursor for phospholipid synthesis. The protein is Glycerol-3-phosphate dehydrogenase [NAD(P)+] of Chlamydia pneumoniae (Chlamydophila pneumoniae).